We begin with the raw amino-acid sequence, 586 residues long: Phosphatase and actin regulator 1 (586 aa).

The short motif at 62-83 (RRRSKFATLGRLFKPWKWRKKK) is the Nuclear localization signal element. Residues 92–117 (AALERKISMRQSREELIKRGVLKEMY) form an RPEL 1 repeat. The segment at 373-414 (ECEDDKENVPHETSYDDSSCLYSRDEEEDDDDDDDDEDDDSS) is disordered. Acidic residues predominate over residues 397–413 (DEEEDDDDDDDDEDDDS). RPEL repeat units follow at residues 428–453 (DSLA…PMQT), 466–491 (TKLT…KPRN), and 504–529 (RRLT…ISFS).

Belongs to the phosphatase and actin regulator family. In terms of assembly, interacts (via RPEL repeats) with ACTA1.

It localises to the cytoplasm. It is found in the synapse. Its subcellular location is the nucleus. Functionally, binds actin monomers (G actin) and plays a role in the reorganization of the actin cytoskeleton and in formation of actin stress fibers. The chain is Phosphatase and actin regulator 1 (phactr1) from Xenopus laevis (African clawed frog).